The sequence spans 407 residues: Glucan 1,3-beta-glucosidase 1 (407 aa).

An N-terminal signal peptide occupies residues 1–22; it reads MLSFTSVFSFFLHALLLKTAFS. Glutamate 213 acts as the Proton donor in catalysis. Cysteine 295 and cysteine 406 are disulfide-bonded. Residue glutamate 312 is the Nucleophile of the active site.

The protein belongs to the glycosyl hydrolase 5 (cellulase A) family.

Its subcellular location is the secreted. The enzyme catalyses Successive hydrolysis of beta-D-glucose units from the non-reducing ends of (1-&gt;3)-beta-D-glucans, releasing alpha-glucose.. Beta-glucanases participate in the metabolism of beta-glucan, the main structural component of the cell wall. It could also function biosynthetically as a transglycosylase. In Schizosaccharomyces pombe (strain 972 / ATCC 24843) (Fission yeast), this protein is Glucan 1,3-beta-glucosidase 1 (exg1).